The primary structure comprises 347 residues: NADH-quinone oxidoreductase subunit H (347 aa).

Transmembrane regions (helical) follow at residues 25-45 (ILFMVVQSLVIFLVVVIVAAM), 95-115 (FMFTLAPAVAMFTALASFAII), 128-148 (IGILFFFAMAGIAVYAVLFGG), 168-188 (ISYEVFLGLSLMGVVALTGSF), 200-220 (GWYIIPQFFGFLTFVVAGVAV), 251-271 (FFIGEYVNVVLISALMTCLFF), 284-304 (FIPPAFWFMIKTLFFMTMFIL), and 324-344 (VCLPVTLINLLVTAAVILIFS).

This sequence belongs to the complex I subunit 1 family. In terms of assembly, NDH-1 is composed of 14 different subunits. Subunits NuoA, H, J, K, L, M, N constitute the membrane sector of the complex.

The protein resides in the cell inner membrane. It carries out the reaction a quinone + NADH + 5 H(+)(in) = a quinol + NAD(+) + 4 H(+)(out). NDH-1 shuttles electrons from NADH, via FMN and iron-sulfur (Fe-S) centers, to quinones in the respiratory chain. The immediate electron acceptor for the enzyme in this species is believed to be ubiquinone. Couples the redox reaction to proton translocation (for every two electrons transferred, four hydrogen ions are translocated across the cytoplasmic membrane), and thus conserves the redox energy in a proton gradient. This subunit may bind ubiquinone. The polypeptide is NADH-quinone oxidoreductase subunit H (Psychrobacter arcticus (strain DSM 17307 / VKM B-2377 / 273-4)).